The following is a 138-amino-acid chain: Acidic phospholipase A2 PePLA2 (138 aa).

The N-terminal stretch at 1-16 is a signal peptide; it reads MRTLWIMAVLLLGVEG. 7 disulfide bridges follow: Cys42/Cys131, Cys44/Cys60, Cys59/Cys110, Cys65/Cys138, Cys66/Cys103, Cys73/Cys97, and Cys91/Cys101. Ca(2+) contacts are provided by Tyr43, Gly45, and Gly47. The active site involves His63. Residue Asp64 coordinates Ca(2+). Residue Asp104 is part of the active site.

The protein belongs to the phospholipase A2 family. Group II subfamily. D49 sub-subfamily. Ca(2+) serves as cofactor. As to expression, expressed by the venom gland.

The protein localises to the secreted. It carries out the reaction a 1,2-diacyl-sn-glycero-3-phosphocholine + H2O = a 1-acyl-sn-glycero-3-phosphocholine + a fatty acid + H(+). PLA2 catalyzes the calcium-dependent hydrolysis of the 2-acyl groups in 3-sn-phosphoglycerides. This Protobothrops elegans (Elegant pitviper) protein is Acidic phospholipase A2 PePLA2.